We begin with the raw amino-acid sequence, 355 residues long: Galectin-9 (355 aa).

Galectin domains are found at residues 17–148 (FSGT…ISFQ) and 227–355 (FITT…HVQT). Residues Asn48, His61, Arg65, Asn75, 82-88 (WGPEERK), His267, Arg271, Thr281, and 287-293 (WGSEERS) each bind a beta-D-galactoside.

As to quaternary structure, monomer. As to expression, peripheral blood leukocytes and lymphatic tissues. Expressed in lung, liver, breast and kidney with higher levels in tumor endothelial cells than normal endothelium (at protein level). Expressed in trophoblast cells in decidua and placenta in pregnancy (at protein level). Isoform 2 is the most abundant isoform expressed in endothelial cells. Upon endothelial cell activation isoform 2 expression decreases while expression of isoform 3 and isoform 5 increases. Isoform 4 decreases in pathological pregnancy.

The protein resides in the cytoplasm. Its subcellular location is the nucleus. It is found in the secreted. In terms of biological role, binds galactosides. Has high affinity for the Forssman pentasaccharide. Ligand for HAVCR2/TIM3. Binding to HAVCR2 induces T-helper type 1 lymphocyte (Th1) death. Also stimulates bactericidal activity in infected macrophages by causing macrophage activation and IL1B secretion which restricts intracellular bacterial growth. Ligand for P4HB; the interaction retains P4HB at the cell surface of Th2 T-helper cells, increasing disulfide reductase activity at the plasma membrane, altering the plasma membrane redox state and enhancing cell migration. Ligand for CD44; the interaction enhances binding of SMAD3 to the FOXP3 promoter, leading to up-regulation of FOXP3 expression and increased induced regulatory T (iTreg) cell stability and suppressive function. Promotes ability of mesenchymal stromal cells to suppress T-cell proliferation. Expands regulatory T-cells and induces cytotoxic T-cell apoptosis following virus infection. Activates ERK1/2 phosphorylation inducing cytokine (IL-6, IL-8, IL-12) and chemokine (CCL2) production in mast and dendritic cells. Inhibits degranulation and induces apoptosis of mast cells. Induces maturation and migration of dendritic cells. Inhibits natural killer (NK) cell function. Can transform NK cell phenotype from peripheral to decidual during pregnancy. Astrocyte derived galectin-9 enhances microglial TNF production. May play a role in thymocyte-epithelial interactions relevant to the biology of the thymus. May provide the molecular basis for urate flux across cell membranes, allowing urate that is formed during purine metabolism to efflux from cells and serving as an electrogenic transporter that plays an important role in renal and gastrointestinal urate excretion. Highly selective to the anion urate. Its function is as follows. Acts as an eosinophil chemoattractant. It also inhibits angiogenesis. Suppresses IFNG production by natural killer cells. This Homo sapiens (Human) protein is Galectin-9 (LGALS9).